Consider the following 103-residue polypeptide: Large ribosomal subunit protein bL21 (103 aa).

It belongs to the bacterial ribosomal protein bL21 family. As to quaternary structure, part of the 50S ribosomal subunit. Contacts protein L20.

In terms of biological role, this protein binds to 23S rRNA in the presence of protein L20. This chain is Large ribosomal subunit protein bL21, found in Polaromonas naphthalenivorans (strain CJ2).